A 422-amino-acid chain; its full sequence is Glucose-1-phosphate adenylyltransferase (422 aa).

Alpha-D-glucose 1-phosphate contacts are provided by residues Tyr-109, Gly-175, 190–191 (EK), and Ser-208.

It belongs to the bacterial/plant glucose-1-phosphate adenylyltransferase family. As to quaternary structure, homotetramer.

It carries out the reaction alpha-D-glucose 1-phosphate + ATP + H(+) = ADP-alpha-D-glucose + diphosphate. Its pathway is glycan biosynthesis; glycogen biosynthesis. Functionally, involved in the biosynthesis of ADP-glucose, a building block required for the elongation reactions to produce glycogen. Catalyzes the reaction between ATP and alpha-D-glucose 1-phosphate (G1P) to produce pyrophosphate and ADP-Glc. The sequence is that of Glucose-1-phosphate adenylyltransferase from Shewanella amazonensis (strain ATCC BAA-1098 / SB2B).